Reading from the N-terminus, the 342-residue chain is MIKVGIVGGTGYTGVELLRLLSRHPDVELTAITSRKEAGLRVDAMYPSLRGWVDLAFTTPDEANLAGCDVVFFATPNGIAMQEAVRLVEAGVRVIDLAADFRIKDIAEWEKWYGMTHASPQLVAEAVYGLPEINRDAVRTARVVANPGCYPTAVQLGFLPLIEAEAIDPASLIADCKSGVSGAGRKAEVHTLFAEATDSFKAYGVAGHRHLPEIRQGLAAVAGQPVGLTFVPHLTPMVRGIHATLYARLKKDVDLQGLFESRYAGERFVDVLPAGSCPETRSVRGSNTCRIAVHRPQGSDTVVVLSVIDNLVKGAAGQAVQNLNLMFGLPESTGLEIVPLMP.

The active site involves Cys-149.

This sequence belongs to the NAGSA dehydrogenase family. Type 1 subfamily.

The protein resides in the cytoplasm. It catalyses the reaction N-acetyl-L-glutamate 5-semialdehyde + phosphate + NADP(+) = N-acetyl-L-glutamyl 5-phosphate + NADPH + H(+). It functions in the pathway amino-acid biosynthesis; L-arginine biosynthesis; N(2)-acetyl-L-ornithine from L-glutamate: step 3/4. Functionally, catalyzes the NADPH-dependent reduction of N-acetyl-5-glutamyl phosphate to yield N-acetyl-L-glutamate 5-semialdehyde. This is N-acetyl-gamma-glutamyl-phosphate reductase from Laribacter hongkongensis (strain HLHK9).